A 1038-amino-acid chain; its full sequence is Bone morphogenetic protein receptor type-2 (1038 aa).

The N-terminal stretch at 1–26 is a signal peptide; it reads MTSSLHRPFRVPWLLWAVLLVSTTAA. Residues 27–150 are Extracellular-facing; it reads SQNQERLCAF…PPHSFNRDET (124 aa). Disulfide bonds link C34–C66, C60–C84, C94–C117, C99–C116, and C118–C123. N55 carries N-linked (GlcNAc...) asparagine glycosylation. An N-linked (GlcNAc...) asparagine glycan is attached at N110. N-linked (GlcNAc...) asparagine glycosylation is present at N126. A helical transmembrane segment spans residues 151–171; it reads IIIALASVSVLAVLIVALCFG. Residues 172 to 1038 are Cytoplasmic-facing; that stretch reads YRMLTGDRKQ…VSKDIGMNCL (867 aa). Positions 203 to 504 constitute a Protein kinase domain; the sequence is LKLLELIGRG…QCAEERMAEL (302 aa). Residues 209-217, K230, and 280-282 contribute to the ATP site; these read IGRGRYGAV and EYY. The active-site Proton acceptor is D333. Residues 337–338 and D351 each bind ATP; that span reads RN. At T379 the chain carries Phosphothreonine. S586 is modified (phosphoserine). A disordered region spans residues 593–626; the sequence is QAQARIPSPETSVTSLSTNTTTTNTTGLTPSTGM. Over residues 603-626 the composition is skewed to low complexity; that stretch reads TSVTSLSTNTTTTNTTGLTPSTGM. Phosphoserine occurs at positions 680 and 681. Residues 746–769 form a disordered region; that stretch reads PKQQNLPKRPTSLPLNTKNSTKEP. A Phosphoserine modification is found at S843. The span at 872 to 896 shows a compositional bias: basic and acidic residues; that stretch reads RREQQAGHDEGVLDRLVDRRERPLE. The disordered stretch occupies residues 872–974; sequence RREQQAGHDE…SGSGEKIKRR (103 aa). 2 stretches are compositionally biased toward polar residues: residues 909–924 and 937–964; these read PCSE…TSTA and RPNS…QDGK.

Belongs to the protein kinase superfamily. TKL Ser/Thr protein kinase family. TGFB receptor subfamily. In terms of assembly, interacts with GDF5. Interacts with BMP4. Interacts with SCUBE3. Interacts with TSC22D1/TSC-22. Interacts with activin A/INHBA. The cofactor is Mg(2+). Mn(2+) is required as a cofactor.

It localises to the cell membrane. The catalysed reaction is L-threonyl-[receptor-protein] + ATP = O-phospho-L-threonyl-[receptor-protein] + ADP + H(+). The enzyme catalyses L-seryl-[receptor-protein] + ATP = O-phospho-L-seryl-[receptor-protein] + ADP + H(+). Its function is as follows. On ligand binding, forms a receptor complex consisting of two type II and two type I transmembrane serine/threonine kinases. Type II receptors phosphorylate and activate type I receptors which autophosphorylate, then bind and activate SMAD transcriptional regulators. Can also mediate signaling through the activation of the p38MAPK cascade. Binds to BMP7, BMP2 and, less efficiently, BMP4. Binding is weak but enhanced by the presence of type I receptors for BMPs. Mediates induction of adipogenesis by GDF6. Promotes signaling also by binding to activin A/INHBA. The chain is Bone morphogenetic protein receptor type-2 (Bmpr2) from Mus musculus (Mouse).